The sequence spans 436 residues: Glutamate-1-semialdehyde 2,1-aminomutase 2 (436 aa).

N6-(pyridoxal phosphate)lysine is present on Lys271.

It belongs to the class-III pyridoxal-phosphate-dependent aminotransferase family. HemL subfamily. As to quaternary structure, homodimer. It depends on pyridoxal 5'-phosphate as a cofactor.

The protein localises to the cytoplasm. The enzyme catalyses (S)-4-amino-5-oxopentanoate = 5-aminolevulinate. It functions in the pathway porphyrin-containing compound metabolism; protoporphyrin-IX biosynthesis; 5-aminolevulinate from L-glutamyl-tRNA(Glu): step 2/2. This is Glutamate-1-semialdehyde 2,1-aminomutase 2 from Exiguobacterium sibiricum (strain DSM 17290 / CCUG 55495 / CIP 109462 / JCM 13490 / 255-15).